A 738-amino-acid polypeptide reads, in one-letter code: Protein Aster-B (738 aa).

A disordered region spans residues 1–81; that stretch reads MKGFKLSCTA…SGGKNSKKSQ (81 aa). Polar residues predominate over residues 8–19; the sequence is CTASNSNRSTPA. Ser-28 and Ser-30 each carry phosphoserine. The span at 41-51 shows a compositional bias: basic and acidic residues; it reads MVEKGSDHSSD. The segment covering 59–70 has biased composition (low complexity); the sequence is QGVQRSCSSQSG. The 68-residue stretch at 96 to 163 folds into the GRAM domain; that stretch reads EDFRKLFKQL…KDICSMTKEK (68 aa). The tract at residues 254-299 is disordered; it reads EENEVNDSSSKSSIETKPDASPQLPKKSITNSTLTSTGSSEAPVSF. A compositionally biased stretch (polar residues) spans 259–268; sequence NDSSSKSSIE. The residue at position 274 (Ser-274) is a Phosphoserine. The segment covering 281 to 295 has biased composition (polar residues); sequence SITNSTLTSTGSSEA. Residues 372–543 enclose the VASt domain; sequence SGRQYVNEVF…ELTKTESTYL (172 aa). Tyr-389 carries the post-translational modification Phosphotyrosine. A phosphoserine mark is found at Ser-550 and Ser-581. Phosphothreonine is present on residues Thr-584, Thr-585, and Thr-587. Residues 623–643 traverse the membrane as a helical segment; it reads LLLVISCVICFSLVLLVVLNM.

In terms of tissue distribution, highly expressed in the adrenal gland (at protein level) and brain. Also found in the kidney, testis and macrophages.

It localises to the endoplasmic reticulum membrane. It is found in the cell membrane. Its function is as follows. Cholesterol transporter that mediates non-vesicular transport of cholesterol from the plasma membrane (PM) to the endoplasmic reticulum (ER). Contains unique domains for binding cholesterol and the PM, thereby serving as a molecular bridge for the transfer of cholesterol from the PM to the ER. Plays a crucial role in cholesterol homeostasis in the adrenal gland and has the unique ability to localize to the PM based on the level of membrane cholesterol. In lipid-poor conditions localizes to the ER membrane and in response to excess cholesterol in the PM is recruited to the endoplasmic reticulum-plasma membrane contact sites (EPCS) which is mediated by the GRAM domain. At the EPCS, the sterol-binding VASt/ASTER domain binds to the cholesterol in the PM and facilitates its transfer from the PM to ER. This Mus musculus (Mouse) protein is Protein Aster-B (Gramd1b).